Reading from the N-terminus, the 863-residue chain is DNA replication licensing factor mcm4-B (863 aa).

The tract at residues Met-1 to His-130 is disordered. Composition is skewed to polar residues over residues Ser-54–Gly-64 and Leu-84–Val-99. The segment at Cys-306 to Cys-331 adopts a C4-type zinc-finger fold. The 210-residue stretch at Ile-458–Val-667 folds into the MCM domain. Residues Tyr-471, Arg-497, Lys-516, Ser-517, Asn-618, Arg-643, Arg-732, and Glu-735 each coordinate ATP. The short motif at Ser-642 to Asp-645 is the Arginine finger element.

It belongs to the MCM family. In terms of assembly, component of the mcm2-7 complex (RLF-M). The complex forms a toroidal hexameric ring with the proposed subunit order mcm2-mcm6-mcm4-mcm7-mcm3-mcm5. The heterodimer of mmcm3/mcm5 interacts with mcm4, mmcm6, mcm7 and weakly with mcm2. Begins to associate with zmcm6 at the neurula stage. Component of the CMG helicase complex, composed of the mcm2-7 complex, the GINS complex and cdc45. In terms of processing, hyperphosphorylated during mitosis in a mechanism requiring cdc2-cyclin B and other kinases. Undergoes dephosphorylation after exiting mitosis, existing in a partially phosphorylated state in the cytosolic interphase mcm complex which associates with the pre-replication complexes (pre-Rcs). Complete dephosphorylation inactivates the mcm complex, preventing its binding to chromatin. Becomes actively phosphorylated during S phase once the mcm complex is assembled on the chromatin. This chromatin-associated phosphorylation occurs during the activation of the pre-Rcs and is independent of cdks. Phosphorylated by the cdc7-dbf4b complex.

It localises to the nucleus. It is found in the chromosome. It catalyses the reaction ATP + H2O = ADP + phosphate + H(+). Functionally, acts as a component of the MCM2-7 complex (MCM complex) which is the replicative helicase essential for 'once per cell cycle' DNA replication initiation and elongation in eukaryotic cells. Core component of CDC45-MCM-GINS (CMG) helicase, the molecular machine that unwinds template DNA during replication, and around which the replisome is built. The active ATPase sites in the MCM2-7 ring are formed through the interaction surfaces of two neighboring subunits such that a critical structure of a conserved arginine finger motif is provided in trans relative to the ATP-binding site of the Walker A box of the adjacent subunit. The six ATPase active sites, however, are likely to contribute differentially to the complex helicase activity. The protein is DNA replication licensing factor mcm4-B (mcm4-b) of Xenopus laevis (African clawed frog).